The primary structure comprises 299 residues: Ribosomal RNA small subunit methyltransferase A (299 aa).

S-adenosyl-L-methionine contacts are provided by Asn-44, Val-46, Gly-71, Glu-92, Asp-122, and Asn-141.

This sequence belongs to the class I-like SAM-binding methyltransferase superfamily. rRNA adenine N(6)-methyltransferase family. RsmA subfamily.

The protein localises to the cytoplasm. The enzyme catalyses adenosine(1518)/adenosine(1519) in 16S rRNA + 4 S-adenosyl-L-methionine = N(6)-dimethyladenosine(1518)/N(6)-dimethyladenosine(1519) in 16S rRNA + 4 S-adenosyl-L-homocysteine + 4 H(+). Functionally, specifically dimethylates two adjacent adenosines (A1518 and A1519) in the loop of a conserved hairpin near the 3'-end of 16S rRNA in the 30S particle. May play a critical role in biogenesis of 30S subunits. The polypeptide is Ribosomal RNA small subunit methyltransferase A (Rhodococcus erythropolis (strain PR4 / NBRC 100887)).